The chain runs to 529 residues: Bifunctional purine biosynthesis protein PurH (529 aa).

The region spanning 2 to 149 (TDLVPLRRAL…KNHSFVTVLT (148 aa)) is the MGS-like domain.

It belongs to the PurH family.

It catalyses the reaction (6R)-10-formyltetrahydrofolate + 5-amino-1-(5-phospho-beta-D-ribosyl)imidazole-4-carboxamide = 5-formamido-1-(5-phospho-D-ribosyl)imidazole-4-carboxamide + (6S)-5,6,7,8-tetrahydrofolate. The catalysed reaction is IMP + H2O = 5-formamido-1-(5-phospho-D-ribosyl)imidazole-4-carboxamide. The protein operates within purine metabolism; IMP biosynthesis via de novo pathway; 5-formamido-1-(5-phospho-D-ribosyl)imidazole-4-carboxamide from 5-amino-1-(5-phospho-D-ribosyl)imidazole-4-carboxamide (10-formyl THF route): step 1/1. Its pathway is purine metabolism; IMP biosynthesis via de novo pathway; IMP from 5-formamido-1-(5-phospho-D-ribosyl)imidazole-4-carboxamide: step 1/1. This is Bifunctional purine biosynthesis protein PurH from Dinoroseobacter shibae (strain DSM 16493 / NCIMB 14021 / DFL 12).